The chain runs to 274 residues: Diaminopimelate epimerase (274 aa).

Substrate contacts are provided by asparagine 11, glutamine 44, and asparagine 64. Cysteine 73 serves as the catalytic Proton donor. Substrate contacts are provided by residues 74 to 75, asparagine 157, asparagine 190, and 208 to 209; these read GN and ER. The active-site Proton acceptor is the cysteine 217. Residue 218-219 participates in substrate binding; it reads GS.

Belongs to the diaminopimelate epimerase family. Homodimer.

The protein resides in the cytoplasm. It carries out the reaction (2S,6S)-2,6-diaminopimelate = meso-2,6-diaminopimelate. The protein operates within amino-acid biosynthesis; L-lysine biosynthesis via DAP pathway; DL-2,6-diaminopimelate from LL-2,6-diaminopimelate: step 1/1. In terms of biological role, catalyzes the stereoinversion of LL-2,6-diaminopimelate (L,L-DAP) to meso-diaminopimelate (meso-DAP), a precursor of L-lysine and an essential component of the bacterial peptidoglycan. The polypeptide is Diaminopimelate epimerase (Mannheimia succiniciproducens (strain KCTC 0769BP / MBEL55E)).